The following is a 433-amino-acid chain: Sulfhydrylase FUB7 (433 aa).

N6-(pyridoxal phosphate)lysine is present on K211.

Belongs to the trans-sulfuration enzymes family. It depends on pyridoxal 5'-phosphate as a cofactor.

The protein operates within mycotoxin biosynthesis. Sulfhydrylase; part of the gene cluster that mediates the biosynthesis of fusaric acid, a mycotoxin with low to moderate toxicity to animals and humans, but with high phytotoxic properties. L-aspartate is suggested as fusaric acid amino acid precursor that is activated and further processed to O-acetyl-L-homoserine by cluster enzymes aspartate kinase FUB3 and homoserine O-acetyltransferase FUB5, as well as enzymes of the primary metabolism. The polyketide synthase (PKS) FUB1 generates the triketide trans-2-hexenal which is presumptively released by the hydrolase FUB4 and linked to the NRPS-bound amino acid precursor by NAD(P)-dependent dehydrogenase FUB6. FUB1, FUB4, and the non-canonical NRPS Fub8 may form an enzyme complex. Further processing of the NRPS-bound intermediate might be carried out by FUB6 and the O-acetylhomoserine FUB7, enabling a spontaneous electrocyclization to close the carbon backbone of fusaric acid. Dihydrofusaric acid is likely to be released via reduction by the thioester reductase (TR) domain of FUB8 whereupon the final oxidation to fusaric acid may (also) be performed by the FMN-dependent dehydrogenase FUB9. In Gibberella moniliformis (strain M3125 / FGSC 7600) (Maize ear and stalk rot fungus), this protein is Sulfhydrylase FUB7.